We begin with the raw amino-acid sequence, 303 residues long: MKKIVELKNPLRDGEILSVSNLSCFFNEKTVHEVKVIDNFSYTFAKNKVYCIIGDSGSGKSTLVNHFNGLIKPAYGDIWVKDIYIGQKQRKIKDFKRLRKTISIVFQFPEYQLFKDTVEKDIMFGPIALGQSKNEARQKAAYYLEKMGLKYTFLERNPFELSGGQKRRVAIAGILAIEPEVLIFDEPTAGLDPEGEREMMRLIKDAKASGRTVFMITHQMENVLEVADEVLVLSKGQLVKSGDPYEVFMDEAFLAHTTIIMPPVIQVIKDLINLNPKFSCLLDFKPRNLDQLADAINNTIAHG.

The region spanning 17–260 (LSVSNLSCFF…EAFLAHTTII (244 aa)) is the ABC transporter domain. 54 to 61 (GDSGSGKS) serves as a coordination point for ATP.

This sequence belongs to the ABC transporter superfamily. Energy-coupling factor EcfA family. In terms of assembly, forms a stable energy-coupling factor (ECF) transporter complex composed of 2 membrane-embedded substrate-binding proteins (S component), 2 ATP-binding proteins (A component) and 2 transmembrane proteins (T component).

The protein resides in the cell membrane. In terms of biological role, ATP-binding (A) component of a common energy-coupling factor (ECF) ABC-transporter complex. Unlike classic ABC transporters this ECF transporter provides the energy necessary to transport a number of different substrates. The chain is Energy-coupling factor transporter ATP-binding protein EcfA2 from Mycoplasma pneumoniae (strain ATCC 29342 / M129 / Subtype 1) (Mycoplasmoides pneumoniae).